A 251-amino-acid polypeptide reads, in one-letter code: uncharacterized protein (251 aa).

The protein belongs to the PaiB family.

This is an uncharacterized protein from Emericella nidulans (strain FGSC A4 / ATCC 38163 / CBS 112.46 / NRRL 194 / M139) (Aspergillus nidulans).